The chain runs to 20 residues: Cytochrome c oxidase subunit 6A1, mitochondrial (20 aa).

This sequence belongs to the cytochrome c oxidase subunit 6A family. As to quaternary structure, component of the cytochrome c oxidase (complex IV, CIV), a multisubunit enzyme composed of 14 subunits. The complex is composed of a catalytic core of 3 subunits MT-CO1, MT-CO2 and MT-CO3, encoded in the mitochondrial DNA, and 11 supernumerary subunits COX4I, COX5A, COX5B, COX6A, COX6B, COX6C, COX7A, COX7B, COX7C, COX8 and NDUFA4, which are encoded in the nuclear genome. The complex exists as a monomer or a dimer and forms supercomplexes (SCs) in the inner mitochondrial membrane with NADH-ubiquinone oxidoreductase (complex I, CI) and ubiquinol-cytochrome c oxidoreductase (cytochrome b-c1 complex, complex III, CIII), resulting in different assemblies (supercomplex SCI(1)III(2)IV(1) and megacomplex MCI(2)III(2)IV(2)). As to expression, liver specific isoform.

The protein resides in the mitochondrion inner membrane. It functions in the pathway energy metabolism; oxidative phosphorylation. Component of the cytochrome c oxidase, the last enzyme in the mitochondrial electron transport chain which drives oxidative phosphorylation. The respiratory chain contains 3 multisubunit complexes succinate dehydrogenase (complex II, CII), ubiquinol-cytochrome c oxidoreductase (cytochrome b-c1 complex, complex III, CIII) and cytochrome c oxidase (complex IV, CIV), that cooperate to transfer electrons derived from NADH and succinate to molecular oxygen, creating an electrochemical gradient over the inner membrane that drives transmembrane transport and the ATP synthase. Cytochrome c oxidase is the component of the respiratory chain that catalyzes the reduction of oxygen to water. Electrons originating from reduced cytochrome c in the intermembrane space (IMS) are transferred via the dinuclear copper A center (CU(A)) of subunit 2 and heme A of subunit 1 to the active site in subunit 1, a binuclear center (BNC) formed by heme A3 and copper B (CU(B)). The BNC reduces molecular oxygen to 2 water molecules unsing 4 electrons from cytochrome c in the IMS and 4 protons from the mitochondrial matrix. This is Cytochrome c oxidase subunit 6A1, mitochondrial (COX6A1) from Canis lupus familiaris (Dog).